A 238-amino-acid chain; its full sequence is MIYAGILAGGIGSRMGNVPLPKQFLDIDNKPILIHTIEKFILVSEFNEIIIATPAQWISHTQDILKKYNITDQRVKVVAGGTDRNETIMNIIDHIRNVNGINNDDVIVTHDAVRPFLTQRIIKENIEVAAKYGAVDTVIEAIDTIVMSKDKQNIHSIPVRNEMYQGQTPQSFNIKLLQDSYRALSSEQKEILSDACKIIVESGHAVKLVRGELYNIKVTTPYDLKVANAIIQGDIADD.

Residues 7–10 and 81–87 each bind CTP; these read LAGG and GTDRNET.

This sequence belongs to the IspD/TarI cytidylyltransferase family. TarI subfamily. As to quaternary structure, heterodimer together with TarJ.

The catalysed reaction is D-ribitol 5-phosphate + CTP + H(+) = CDP-L-ribitol + diphosphate. It participates in cell wall biogenesis; poly(ribitol phosphate) teichoic acid biosynthesis. Catalyzes the transfer of the cytidylyl group of CTP to D-ribitol 5-phosphate. The sequence is that of Ribitol-5-phosphate cytidylyltransferase 2 from Staphylococcus aureus (strain NCTC 8325 / PS 47).